The sequence spans 131 residues: Fluoride-specific ion channel FluC 1 (131 aa).

The next 4 membrane-spanning stretches (helical) occupy residues 4 to 24, 40 to 60, 73 to 93, and 108 to 128; these read LALP…GAWL, HWGT…VLAL, LILL…TFAV, and LVLA…GVGL. Na(+)-binding residues include Gly-83 and Ser-86.

It belongs to the fluoride channel Fluc/FEX (TC 1.A.43) family.

Its subcellular location is the cell inner membrane. It carries out the reaction fluoride(in) = fluoride(out). Na(+) is not transported, but it plays an essential structural role and its presence is essential for fluoride channel function. Fluoride-specific ion channel. Important for reducing fluoride concentration in the cell, thus reducing its toxicity. This Prochlorococcus marinus (strain MIT 9313) protein is Fluoride-specific ion channel FluC 1.